Here is a 306-residue protein sequence, read N- to C-terminus: Glutaminase (306 aa).

Positions 64, 115, 159, 166, 190, 242, and 260 each coordinate substrate.

Belongs to the glutaminase family. As to quaternary structure, homotetramer.

It catalyses the reaction L-glutamine + H2O = L-glutamate + NH4(+). The polypeptide is Glutaminase (Aeromonas hydrophila subsp. hydrophila (strain ATCC 7966 / DSM 30187 / BCRC 13018 / CCUG 14551 / JCM 1027 / KCTC 2358 / NCIMB 9240 / NCTC 8049)).